A 216-amino-acid chain; its full sequence is GTP cyclohydrolase-2 (216 aa).

Residue 51–55 (RIHSE) participates in GTP binding. 3 residues coordinate Zn(2+): cysteine 56, cysteine 67, and cysteine 69. Residues glutamine 72, 94-96 (EGR), and threonine 116 contribute to the GTP site. The active-site Proton acceptor is the aspartate 128. Arginine 130 serves as the catalytic Nucleophile. Threonine 151 and lysine 156 together coordinate GTP.

This sequence belongs to the GTP cyclohydrolase II family. Zn(2+) serves as cofactor.

It carries out the reaction GTP + 4 H2O = 2,5-diamino-6-hydroxy-4-(5-phosphoribosylamino)-pyrimidine + formate + 2 phosphate + 3 H(+). Its pathway is cofactor biosynthesis; riboflavin biosynthesis; 5-amino-6-(D-ribitylamino)uracil from GTP: step 1/4. Catalyzes the conversion of GTP to 2,5-diamino-6-ribosylamino-4(3H)-pyrimidinone 5'-phosphate (DARP), formate and pyrophosphate. The sequence is that of GTP cyclohydrolase-2 from Haemophilus influenzae (strain 86-028NP).